The following is a 213-amino-acid chain: Nickel-cobalt-cadmium resistance protein NccN (213 aa).

The next 4 helical transmembrane spans lie at 24-44 (IGIW…GHSQ), 48-68 (TWIS…ATVG), 113-133 (ESIT…PAVI), and 180-200 (NLAD…VELA).

This sequence to A.eutrophus CzcN.

It is found in the cell inner membrane. In terms of biological role, component of the NCC cation-efflux system that confers resistance to nickel, cobalt and cadmium. Appears to be involved in metal specificity but affects only nickel resistance. May be involved in nickel transport. The chain is Nickel-cobalt-cadmium resistance protein NccN (nccN) from Alcaligenes xylosoxydans xylosoxydans (Achromobacter xylosoxidans).